A 237-amino-acid chain; its full sequence is Ribonuclease PH (237 aa).

Residues Arg86 and 124–126 (GTR) contribute to the phosphate site.

The protein belongs to the RNase PH family. In terms of assembly, homohexameric ring arranged as a trimer of dimers.

The catalysed reaction is tRNA(n+1) + phosphate = tRNA(n) + a ribonucleoside 5'-diphosphate. Phosphorolytic 3'-5' exoribonuclease that plays an important role in tRNA 3'-end maturation. Removes nucleotide residues following the 3'-CCA terminus of tRNAs; can also add nucleotides to the ends of RNA molecules by using nucleoside diphosphates as substrates, but this may not be physiologically important. Probably plays a role in initiation of 16S rRNA degradation (leading to ribosome degradation) during starvation. The sequence is that of Ribonuclease PH from Methylorubrum extorquens (strain PA1) (Methylobacterium extorquens).